We begin with the raw amino-acid sequence, 437 residues long: GTP-binding protein ERG (437 aa).

The span at 39–50 shows a compositional bias: polar residues; the sequence is QPNLDEPTSINE. The interval 39–65 is disordered; the sequence is QPNLDEPTSINEDGSSSDSVFDSSQYP. Low complexity predominate over residues 51 to 62; the sequence is DGSSSDSVFDSS. Residues Ser111 and Ser112 each carry the phosphoserine modification. Positions 152-333 constitute an Era-type G domain; sequence KSLNVGIIGP…LMDQAVKKPW (182 aa). The interval 160–167 is G1; that stretch reads GPPNAGKS. 160–167 contributes to the GTP binding site; the sequence is GPPNAGKS. Positions 186-190 are G2; the sequence is NTTTH. A G3 region spans residues 207–210; it reads DTPG. GTP-binding positions include 207–211 and 279–282; these read DTPGL and NKVD. The tract at residues 279–282 is G4; the sequence is NKVD. The tract at residues 309 to 311 is G5; it reads ISG. In terms of domain architecture, KH type-2 spans 361–437; it reads VHQEIPYGLE…VHLILQVKLK (77 aa).

Belongs to the TRAFAC class TrmE-Era-EngA-EngB-Septin-like GTPase superfamily. Era GTPase family.

Its function is as follows. Has a crucial role in plant growth and development, possibly by influencing mitochondrial division. This Arabidopsis thaliana (Mouse-ear cress) protein is GTP-binding protein ERG (ERG).